A 350-amino-acid polypeptide reads, in one-letter code: tRNA uridine(34) hydroxylase (350 aa).

The Rhodanese domain occupies 146–240 (DDPDAVFIDM…YARRAREQGL (95 aa)). Cys200 serves as the catalytic Cysteine persulfide intermediate. Positions 319 to 328 (RRRRAGRENG) are enriched in basic and acidic residues. Residues 319 to 350 (RRRRAGRENGNKIFNKSRGRLNSKLSIPDPAE) are disordered.

It belongs to the TrhO family.

The catalysed reaction is uridine(34) in tRNA + AH2 + O2 = 5-hydroxyuridine(34) in tRNA + A + H2O. Functionally, catalyzes oxygen-dependent 5-hydroxyuridine (ho5U) modification at position 34 in tRNAs. In Salmonella choleraesuis (strain SC-B67), this protein is tRNA uridine(34) hydroxylase.